Reading from the N-terminus, the 892-residue chain is Major core protein OPG136 precursor (892 aa).

Positions 616–698 (SPEGEETIIC…ILDRIITNAG (83 aa)) are excised as a propeptide.

It belongs to the orthopxvirus protein OPG136 family. In terms of assembly, interacts with P39/A4. The precursor is cleaved by OPG083 to give rise to the 62 kDa mature protein during virion maturation. Proteolytic cleavage of major core proteins OPG136, OPG129, and OPG098, which occurs at a late stage of core formation, is required for production of infectious mature virions (MV).

The protein localises to the virion. In terms of biological role, core protein 4a is the most abundant virion protein. Major component of the virion core that undergoes proteolytic processing during the immature virion (IV) to mature virion (MV) transition. The chain is Major core protein OPG136 precursor (OPG136) from Homo sapiens (Human).